Here is a 542-residue protein sequence, read N- to C-terminus: Cytochrome P450 monooxygenase sdnH (542 aa).

The chain crosses the membrane as a helical span at residues 25–45 (LYVAGGILGAFTVYSIILVVY). Positions 141–160 (IIPPRGLGQEDSIGSTRSHD) are disordered. Residues 340 to 360 (FMGAGTYPTAATLIFVAYYIL) traverse the membrane as a helical segment. C483 is a binding site for heme. N506 carries an N-linked (GlcNAc...) asparagine glycan.

The protein belongs to the cytochrome P450 family. Heme serves as cofactor.

It localises to the membrane. It participates in antibiotic biosynthesis. In terms of biological role, cytochrome P450 monooxygenase; part of the gene cluster that mediates the biosynthesis of sordarin and hypoxysordarin, glycoside antibiotics with a unique tetracyclic diterpene aglycone structure. First, the geranylgeranyl diphosphate synthase sdnC constructs GGDP from farnesyl diphosphate and isopentenyl diphosphate. The diterpene cyclase sdnA then catalyzes the cyclization of GGDP to afford cycloaraneosene. Cycloaraneosene is then hydroxylated four times by the putative cytochrome P450 monooxygenases sdnB, sdnE, sdnF and sdnH to give a hydroxylated cycloaraneosene derivative such as cycloaraneosene-8,9,13,19-tetraol. Although the order of the hydroxylations is unclear, at least C8, C9 and C13 of the cycloaraneosene skeleton are hydroxylated before the sordaricin formation. Dehydration of the 13-hydroxy group of the hydroxylated cycloaraneosene derivative might be catalyzed by an unassigned hypothetical protein such as sdnG and sdnP to construct the cyclopentadiene moiety. The FAD-dependent oxidoreductase sdnN is proposed to catalyze the oxidation at C9 of the hydroxylated cycloaraneosene derivative and also catalyze the Baeyer-Villiger oxidation to give the lactone intermediate. The presumed lactone intermediate would be hydrolyzed to give an acrolein moiety and a carboxylate moiety. Then, [4+2]cycloaddition would occur between the acrolein moiety and the cyclopentadiene moiety to give sordaricin. SdnN might also be involved in the [4+2]cycloaddition after the hypothesized oxidation to accommodate the oxidized product and prompt the [4+2]cycloaddition. GDP-6-deoxy-D-altrose may be biosynthesized from GDP-D-mannose by the putative GDP-mannose-4,6-dehydratase sdnI and the short-chain dehydrogenase sdnK. The glycosyltransferase sdnJ catalyzes the attachment of 6-deoxy-D-altrose onto the 19-hydroxy group of sordaricin to give 4'-O-demethylsordarin. The methyltransferase sdnD would complete the biosynthesis of sordarin. Sordarin can be further modified into hypoxysordarin. The unique acyl chain at the 3'-hydroxy group of hypoxysordarin would be constructed by an iterative type I PKS sdnO and the trans-acting polyketide methyltransferase sdnL. SdnL would be responsible for the introduction of an alpha-methyl group of the polyketide chain. Alternatively, the beta-lactamase-like protein sdnR might be responsible for the cleavage and transfer of the polyketide chain from the PKS sdnO to sordarin. Two putative cytochrome P450 monooxygenases, sdnQ and sdnT, might catalyze the epoxidations of the polyketide chain to complete the biosynthesis of hypoxysordarin. Transcriptional regulators sdnM and sdnS are presumably encoded for the transcriptional regulation of the expression of the sdn gene cluster. This is Cytochrome P450 monooxygenase sdnH from Sordaria araneosa (Pleurage araneosa).